We begin with the raw amino-acid sequence, 512 residues long: ATP synthase subunit alpha (512 aa).

169–176 is an ATP binding site; the sequence is GDRQTGKT.

This sequence belongs to the ATPase alpha/beta chains family. As to quaternary structure, F-type ATPases have 2 components, CF(1) - the catalytic core - and CF(0) - the membrane proton channel. CF(1) has five subunits: alpha(3), beta(3), gamma(1), delta(1), epsilon(1). CF(0) has three main subunits: a(1), b(2) and c(9-12). The alpha and beta chains form an alternating ring which encloses part of the gamma chain. CF(1) is attached to CF(0) by a central stalk formed by the gamma and epsilon chains, while a peripheral stalk is formed by the delta and b chains.

It localises to the cell inner membrane. It catalyses the reaction ATP + H2O + 4 H(+)(in) = ADP + phosphate + 5 H(+)(out). Produces ATP from ADP in the presence of a proton gradient across the membrane. The alpha chain is a regulatory subunit. This Orientia tsutsugamushi (strain Boryong) (Rickettsia tsutsugamushi) protein is ATP synthase subunit alpha.